A 1260-amino-acid polypeptide reads, in one-letter code: uncharacterized protein (1260 aa).

Its subcellular location is the plastid. The protein localises to the chloroplast. This is an uncharacterized protein from Ostreococcus tauri.